Reading from the N-terminus, the 159-residue chain is Ecotin (159 aa).

A signal peptide spans 1-22 (MRPTPMTAILALTLAAAAPAMA). Cysteines 68 and 105 form a disulfide.

Belongs to the protease inhibitor I11 (ecotin) family. In terms of assembly, homodimer.

It is found in the periplasm. In terms of biological role, general inhibitor of family S1 serine proteases. This is Ecotin from Pseudomonas putida (strain GB-1).